The primary structure comprises 313 residues: tRNA pseudouridine synthase B (313 aa).

Residue His44 participates in substrate binding. Catalysis depends on Asp49, which acts as the Nucleophile. 3 residues coordinate substrate: Tyr77, Tyr180, and Leu201.

The protein belongs to the pseudouridine synthase TruB family. Type 1 subfamily.

It catalyses the reaction uridine(55) in tRNA = pseudouridine(55) in tRNA. Its function is as follows. Responsible for synthesis of pseudouridine from uracil-55 in the psi GC loop of transfer RNAs. This is tRNA pseudouridine synthase B from Hamiltonella defensa subsp. Acyrthosiphon pisum (strain 5AT).